We begin with the raw amino-acid sequence, 423 residues long: MTRIVDIVGREVLDSRGNPTVEVDVYLENGVFGRSAVPSGASTGAHEAVELRDGGKRYQGKGVEKAVAAINGEIFKELGGRDARNQLAIDQAMIALDGTSNKERLGANAILGVSLSVAKAAAKSFGLPLYRYIGGTQAHLLPTPMMNIINGGAHADNPIDFQEFMIIPVGAPTFKEAVRYGAEIFHTLKRYLQDAGYNTNVGDEGGFAPNLKSAEQAINLIMESITSCGYKPGEQIAIGLDCASTEFYKNSLYAYEGEGKCRDVKEQVEYLAHLVDSYPIITIEDGMAEDDWAGWKQLTQAIGNKCQLVGDDLFVTNSARLRDGIKMGAANSILIKVNQIGTLSETLDAIETAHKAGYRAIISHRSGETEDSFIADLTVATNCGQIKTGSLARSDRLAKYNQLIRIEEMLGTQARYEGNWHRR.

A (2R)-2-phosphoglycerate-binding site is contributed by Gln-162. Glu-204 functions as the Proton donor in the catalytic mechanism. 3 residues coordinate Mg(2+): Asp-241, Glu-284, and Asp-311. Residues Lys-336, Arg-365, Ser-366, and Lys-387 each contribute to the (2R)-2-phosphoglycerate site. Residue Lys-336 is the Proton acceptor of the active site.

This sequence belongs to the enolase family. Mg(2+) serves as cofactor.

The protein localises to the cytoplasm. The protein resides in the secreted. It is found in the cell surface. It catalyses the reaction (2R)-2-phosphoglycerate = phosphoenolpyruvate + H2O. It functions in the pathway carbohydrate degradation; glycolysis; pyruvate from D-glyceraldehyde 3-phosphate: step 4/5. Catalyzes the reversible conversion of 2-phosphoglycerate (2-PG) into phosphoenolpyruvate (PEP). It is essential for the degradation of carbohydrates via glycolysis. The polypeptide is Enolase (Bartonella bacilliformis (strain ATCC 35685 / KC583 / Herrer 020/F12,63)).